The primary structure comprises 244 residues: Protein IN2-1 homolog B (244 aa).

The interval 1-27 (MAAAAAAPASSEKEVLPPSLTSSSEPP) is disordered. A GST N-terminal domain is found at 32–113 (GTTRLYVAYH…YIDTNFEGPA (82 aa)). Residues Val-85 and 97-98 (ES) contribute to the glutathione site. Residues 118–241 (DSEKQQFAEE…FLLEHTKKRL (124 aa)) form the GST C-terminal domain.

In Oryza sativa subsp. indica (Rice), this protein is Protein IN2-1 homolog B (GSTZ5).